Reading from the N-terminus, the 390-residue chain is Ribosomal RNA large subunit methyltransferase G (390 aa).

Belongs to the methyltransferase superfamily. RlmG family.

It is found in the cytoplasm. It catalyses the reaction guanosine(1835) in 23S rRNA + S-adenosyl-L-methionine = N(2)-methylguanosine(1835) in 23S rRNA + S-adenosyl-L-homocysteine + H(+). Its function is as follows. Specifically methylates the guanine in position 1835 (m2G1835) of 23S rRNA. The sequence is that of Ribosomal RNA large subunit methyltransferase G from Alcanivorax borkumensis (strain ATCC 700651 / DSM 11573 / NCIMB 13689 / SK2).